The following is a 607-amino-acid chain: Glucose-6-phosphate isomerase, glycosomal (607 aa).

The active-site Proton donor is glutamate 411. Active-site residues include histidine 442 and lysine 571. The Microbody targeting signal signature appears at 605-607 (SHL).

This sequence belongs to the GPI family. In terms of assembly, homodimer.

It localises to the glycosome. It carries out the reaction alpha-D-glucose 6-phosphate = beta-D-fructose 6-phosphate. Its pathway is carbohydrate degradation; glycolysis; D-glyceraldehyde 3-phosphate and glycerone phosphate from D-glucose: step 2/4. The sequence is that of Glucose-6-phosphate isomerase, glycosomal (PGI) from Trypanosoma brucei brucei.